A 176-amino-acid chain; its full sequence is Ribosome rescue factor SmrB (176 aa).

The region spanning 98–173 is the Smr domain; the sequence is LDLHGLNQYQ…NDAAIMVIIE (76 aa).

This sequence belongs to the SmrB family. Associates with collided ribosomes, but not with correctly translating polysomes.

Functionally, acts as a ribosome collision sensor. Detects stalled/collided disomes (pairs of ribosomes where the leading ribosome is stalled and a second ribosome has collided with it) and endonucleolytically cleaves mRNA at the 5' boundary of the stalled ribosome. Stalled/collided disomes form a new interface (primarily via the 30S subunits) that binds SmrB. Cleaved mRNA becomes available for tmRNA ligation, leading to ribosomal subunit dissociation and rescue of stalled ribosomes. The polypeptide is Ribosome rescue factor SmrB (Buchnera aphidicola subsp. Schizaphis graminum (strain Sg)).